Reading from the N-terminus, the 428-residue chain is Glutamate-1-semialdehyde 2,1-aminomutase (428 aa).

Position 265 is an N6-(pyridoxal phosphate)lysine (lysine 265).

Belongs to the class-III pyridoxal-phosphate-dependent aminotransferase family. HemL subfamily. As to quaternary structure, homodimer. Pyridoxal 5'-phosphate serves as cofactor.

Its subcellular location is the cytoplasm. The enzyme catalyses (S)-4-amino-5-oxopentanoate = 5-aminolevulinate. Its pathway is porphyrin-containing compound metabolism; protoporphyrin-IX biosynthesis; 5-aminolevulinate from L-glutamyl-tRNA(Glu): step 2/2. In Thioalkalivibrio sulfidiphilus (strain HL-EbGR7), this protein is Glutamate-1-semialdehyde 2,1-aminomutase.